The sequence spans 118 residues: 5-hydroxyisourate hydrolase (118 aa).

The substrate site is built by His-7, Arg-46, and Tyr-115.

This sequence belongs to the transthyretin family. 5-hydroxyisourate hydrolase subfamily. Homotetramer.

The enzyme catalyses 5-hydroxyisourate + H2O = 5-hydroxy-2-oxo-4-ureido-2,5-dihydro-1H-imidazole-5-carboxylate + H(+). In terms of biological role, catalyzes the hydrolysis of 5-hydroxyisourate (HIU) to 2-oxo-4-hydroxy-4-carboxy-5-ureidoimidazoline (OHCU). In Brucella melitensis biotype 1 (strain ATCC 23456 / CCUG 17765 / NCTC 10094 / 16M), this protein is 5-hydroxyisourate hydrolase.